We begin with the raw amino-acid sequence, 125 residues long: Cytochrome c2 (125 aa).

The signal sequence occupies residues 1–21 (MKAIKIAMVGAALVWSASAYA). Residues 23 to 123 (GDPVKGEQVF…DVIAFLATQH (101 aa)) enclose the Cytochrome c domain. Heme c contacts are provided by Cys-35, Cys-38, His-39, and Met-101.

This sequence belongs to the cytochrome c family. Binds 1 heme c group covalently per subunit.

Its function is as follows. Cytochrome c2 is found mainly in purple, non-sulfur, photosynthetic bacteria where it functions as the electron donor to the oxidized bacteriochlorophyll in the photophosphorylation pathway. However, it may also have a role in the respiratory chain and is found in some non-photosynthetic bacteria. This is Cytochrome c2 from Rhodomicrobium vannielii (strain ATCC 17100 / DSM 162 / LMG 4299 / NCIMB 10020 / ATH 3.1.1).